A 140-amino-acid polypeptide reads, in one-letter code: UPF0134 protein MPN_130 (140 aa).

Belongs to the UPF0134 family.

This chain is UPF0134 protein MPN_130, found in Mycoplasma pneumoniae (strain ATCC 29342 / M129 / Subtype 1) (Mycoplasmoides pneumoniae).